Reading from the N-terminus, the 200-residue chain is MRYGGVDEAGRGPIIGPMVIALVIGDSGYLKELGVKDSKLLTKEQREELFNEIVKNSLVKYEIVSPSLIDRYNLNELEAKVTANLINSIEDEISHIVIDSPERPENYKLRILKYLKKRVKIITKNKGEEDPLVAAASIVAKVIRDREIEKIKEQTGIDFGSGYPSDKRTRKALEQYYRILKPYIRKKWPFEINKKLTDFI.

Residues 1–200 (MRYGGVDEAG…EINKKLTDFI (200 aa)) form the RNase H type-2 domain. Asp-7, Glu-8, and Asp-99 together coordinate a divalent metal cation.

It belongs to the RNase HII family. Mn(2+) serves as cofactor. It depends on Mg(2+) as a cofactor.

Its subcellular location is the cytoplasm. It carries out the reaction Endonucleolytic cleavage to 5'-phosphomonoester.. In terms of biological role, endonuclease that specifically degrades the RNA of RNA-DNA hybrids. The protein is Ribonuclease HII of Nanoarchaeum equitans (strain Kin4-M).